We begin with the raw amino-acid sequence, 85 residues long: Large ribosomal subunit protein bL27 (85 aa).

A disordered region spans residues 1-22; that stretch reads MAHKKAGGSTRNGRDSESKRLG.

It belongs to the bacterial ribosomal protein bL27 family.

In Vibrio vulnificus (strain CMCP6), this protein is Large ribosomal subunit protein bL27.